A 162-amino-acid polypeptide reads, in one-letter code: Caveolin-2 (162 aa).

Residues 1-86 (MGLETEKADV…FEISKYVIYK (86 aa)) lie on the Cytoplasmic side of the membrane. Phosphotyrosine; by SRC is present on Y19. Phosphoserine occurs at positions 20 and 23. Residue Y27 is modified to Phosphotyrosine; by SRC. S36 carries the phosphoserine modification. The segment at residues 87-107 (FLTVFLAIPLAFIAGILFATL) is an intramembrane region (helical). Over 108-162 (SCLHIWILMPFVKTCLMVLPSVQTIWKSVTDVVIGPLCTSVGRIFSSVSMQLSHD) the chain is Cytoplasmic.

Belongs to the caveolin family. Monomer or homodimer. Interacts with CAV1; the interaction forms a stable heterooligomeric complex that is required for targeting to lipid rafts and for caveolae formation. Tyrosine phosphorylated forms do not form heterooligomers with the Tyr-19-phosphorylated form existing as a monomer or dimer and the Tyr-27-form as a monomer only. Interacts (tyrosine phosphorylated form) with the SH2 domain-containing proteins, RASA1, NCK1 and SRC. Interacts (tyrosine phosphorylated form) with INSR; the interaction (Tyr-27-phosphorylated form) is increased on insulin stimulation. Interacts (Tyr-19-phosphorylated form) with MAPK1 (phosphorylated form); the interaction, promoted by insulin, leads to nuclear location and MAPK1 activation. Interacts with STAT3; the interaction is increased on insulin-induced tyrosine phosphorylation leading to STAT activation. Post-translationally, phosphorylated on serine and tyrosine residues. CAV1 promotes phosphorylation on Ser-23 which targets the complex to the plasma membrane, lipid rafts and caveolae. Phosphorylation on Ser-36 appears to modulate mitosis in endothelial cells. Phosphorylation on both Tyr-19 and Tyr-27 is required for insulin-induced 'Ser-727' phosphorylation of STAT3 and its activation. Phosphorylation on Tyr-19 is required for insulin-induced phosphorylation of MAPK1 and DNA binding of STAT3. Tyrosine phosphorylation is induced by both EGF and insulin. In terms of tissue distribution, in the retina, mainly expressed in vessels, but also diffuse expression in the inner and outer plexiform layers and in the inner nuclear layer.

The protein localises to the nucleus. Its subcellular location is the cytoplasm. It is found in the golgi apparatus membrane. The protein resides in the cell membrane. It localises to the membrane. The protein localises to the caveola. Functionally, may act as a scaffolding protein within caveolar membranes. Interacts directly with G-protein alpha subunits and can functionally regulate their activity. Acts as an accessory protein in conjunction with CAV1 in targeting to lipid rafts and driving caveolae formation. The Ser-36 phosphorylated form has a role in modulating mitosis in endothelial cells. Positive regulator of cellular mitogenesis of the MAPK signaling pathway. Required for the insulin-stimulated nuclear translocation and activation of MAPK1 and STAT3, and the subsequent regulation of cell cycle progression. The protein is Caveolin-2 (Cav2) of Rattus norvegicus (Rat).